A 51-amino-acid polypeptide reads, in one-letter code: Large ribosomal subunit protein eL40 (51 aa).

It belongs to the eukaryotic ribosomal protein eL40 family.

This is Large ribosomal subunit protein eL40 from Thermococcus gammatolerans (strain DSM 15229 / JCM 11827 / EJ3).